Consider the following 328-residue polypeptide: Malate dehydrogenase (328 aa).

11-17 (GAAGQIG) lines the NAD(+) pocket. Positions 94 and 100 each coordinate substrate. NAD(+) is bound by residues Asn-107, Gln-114, and 131-133 (VGN). The substrate site is built by Asn-133 and Arg-164. His-189 functions as the Proton acceptor in the catalytic mechanism.

Belongs to the LDH/MDH superfamily. MDH type 2 family.

It carries out the reaction (S)-malate + NAD(+) = oxaloacetate + NADH + H(+). In terms of biological role, catalyzes the reversible oxidation of malate to oxaloacetate. This chain is Malate dehydrogenase, found in Xylella fastidiosa (strain M23).